A 465-amino-acid polypeptide reads, in one-letter code: Methionine aminopeptidase 2-2 (465 aa).

A compositionally biased stretch (basic and acidic residues) spans 1–13 (MGSKTPNDHRRGP). The segment at 1 to 92 (MGSKTPNDHR…KKKTLLGGLQ (92 aa)) is disordered. Over residues 44 to 55 (GETEDGEDEDDD) the composition is skewed to acidic residues. Over residues 71 to 86 (TKKKNKRKKNKKKKKT) the composition is skewed to basic residues. Histidine 217 serves as a coordination point for substrate. Residues aspartate 238, aspartate 249, and histidine 318 each contribute to the a divalent metal cation site. Position 326 (histidine 326) interacts with substrate. 2 residues coordinate a divalent metal cation: glutamate 351 and glutamate 446.

This sequence belongs to the peptidase M24A family. Methionine aminopeptidase eukaryotic type 2 subfamily. Co(2+) serves as cofactor. It depends on Zn(2+) as a cofactor. Requires Mn(2+) as cofactor. The cofactor is Fe(2+).

It is found in the cytoplasm. The catalysed reaction is Release of N-terminal amino acids, preferentially methionine, from peptides and arylamides.. Cotranslationally removes the N-terminal methionine from nascent proteins. The N-terminal methionine is often cleaved when the second residue in the primary sequence is small and uncharged (Met-Ala-, Cys, Gly, Pro, Ser, Thr, or Val). This chain is Methionine aminopeptidase 2-2, found in Blastomyces gilchristii (strain SLH14081) (Blastomyces dermatitidis).